Here is an 89-residue protein sequence, read N- to C-terminus: Small ribosomal subunit protein uS15 (89 aa).

Residues 1 to 21 show a composition bias toward basic and acidic residues; that stretch reads MAISQERKNEIIKEYARHEGD. The tract at residues 1–24 is disordered; it reads MAISQERKNEIIKEYARHEGDTGS.

The protein belongs to the universal ribosomal protein uS15 family. Part of the 30S ribosomal subunit. Forms a bridge to the 50S subunit in the 70S ribosome, contacting the 23S rRNA.

Functionally, one of the primary rRNA binding proteins, it binds directly to 16S rRNA where it helps nucleate assembly of the platform of the 30S subunit by binding and bridging several RNA helices of the 16S rRNA. In terms of biological role, forms an intersubunit bridge (bridge B4) with the 23S rRNA of the 50S subunit in the ribosome. This chain is Small ribosomal subunit protein uS15, found in Enterococcus faecalis (strain ATCC 700802 / V583).